A 154-amino-acid chain; its full sequence is Putative ankyrin repeat protein RBE_1220 (154 aa).

2 ANK repeats span residues 78 to 108 and 113 to 142; these read EKVN…NVDQ and NSRT…ILIL.

The protein is Putative ankyrin repeat protein RBE_1220 of Rickettsia bellii (strain RML369-C).